Reading from the N-terminus, the 577-residue chain is Vacuolar membrane amino acid uptake transporter fnx2 (577 aa).

Over residues 1–14 (MSNPRTKSPNTNRG) the composition is skewed to polar residues. The segment at 1-80 (MSNPRTKSPN…SPHRQDAATT (80 aa)) is disordered. Residues 22-39 (SALLNDSLSSLNGNSSYD) show a composition bias toward low complexity. A compositionally biased stretch (basic and acidic residues) spans 40–62 (SIKDSSKNNKDVAEVNEYPRRPE). 14 helical membrane passes run 91 to 111 (VLPA…IVAS), 123 to 145 (FSQV…PLFG), 157 to 177 (LLAA…SRSL), 186 to 206 (IAGI…SDIV), 217 to 237 (IINV…GYFA), 244 to 264 (IGFL…YFTL), 286 to 306 (LILL…GGNV), 317 to 337 (LLIA…FVAF), 356 to 376 (LCNF…PLFF), 391 to 411 (LIPM…VISL), 418 to 438 (ITVG…RYGY), 448 to 468 (YPFS…VAII), 490 to 510 (GCVL…GIKL), and 547 to 567 (LLGS…CAFV).

The protein belongs to the major facilitator superfamily.

The protein resides in the vacuole. It is found in the membrane. Functionally, MFS-type transporter involved in vacuolar amino acid uptake. In Schizosaccharomyces pombe (strain 972 / ATCC 24843) (Fission yeast), this protein is Vacuolar membrane amino acid uptake transporter fnx2 (fnx2).